Consider the following 896-residue polypeptide: Putative mannosylglycerate hydrolase (896 aa).

The a divalent metal cation site is built by His-12, Asp-14, Asp-125, and His-348. Asp-125 serves as the catalytic Nucleophile.

The protein belongs to the glycosyl hydrolase 38 family. Requires a divalent metal cation as cofactor.

It catalyses the reaction (2R)-2-O-(6-phospho-alpha-D-mannosyl)-glycerate + H2O = alpha-D-mannose 6-phosphate + (R)-glycerate. Functionally, may hydrolyze 6-phospho-mannosyl-D-glycerate to mannose-6-phosphate and glycerate. The protein is Putative mannosylglycerate hydrolase (mngB) of Halalkalibacterium halodurans (strain ATCC BAA-125 / DSM 18197 / FERM 7344 / JCM 9153 / C-125) (Bacillus halodurans).